The following is a 280-amino-acid chain: Borealin (280 aa).

The required for interaction with INCENP stretch occupies residues 1–58; that stretch reads MAPRKGSSRVAKTNSLRRRKLASFLKDFDREVEIRIKQIESDRQNLLKEVDNLYNIEI. The tract at residues 1 to 88 is required for centromere localization; it reads MAPRKGSSRV…NKQALEEAAT (88 aa). The interval 1 to 140 is required for interaction with SENP3; that stretch reads MAPRKGSSRV…ENERKNLQTA (140 aa). Positions 10–109 are required to form a minimal CPC core complex that localizes to the central spindle and midbody and properly executes the role of the CPC during cytokinesis; the sequence is VAKTNSLRRR…TAEAIQTPLK (100 aa). Residues 20–78 are required for interaction with INCENP and BIRC5; it reads KLASFLKDFDREVEIRIKQIESDRQNLLKEVDNLYNIEILRLPKALREMNWLDYFALGG. T88 and T94 each carry phosphothreonine; by TTK. Phosphothreonine is present on T106. S110 is subject to Phosphoserine. Positions 130–169 are disordered; that stretch reads EENERKNLQTARVKRCPPSKKRTQSIQGKGKGKRSSRANT. Residue K135 forms a Glycyl lysine isopeptide (Lys-Gly) (interchain with G-Cter in SUMO2) linkage. Residues 141–152 are compositionally biased toward basic residues; sequence RVKRCPPSKKRT. Position 165 is a phosphoserine; by AURKB (S165). T169 is modified (phosphothreonine; by TTK). Phosphothreonine is present on residues T189 and T204. Phosphoserine is present on residues S219 and S224. T230 carries the phosphothreonine; by TTK modification. Phosphoserine occurs at positions 238 and 244.

This sequence belongs to the borealin family. As to quaternary structure, may form homooligomers and homodimers. Component of the chromosomal passenger complex (CPC) composed of at least BIRC5/survivin, CDCA8/borealin, INCENP, AURKB or AURKC; in the complex forms a triple-helix bundle-based subcomplex with INCENP and BIRC5. Interacts with SENP3, UBE2I and RANBP2. Interacts (phosphorylated) with SGO1 and SGO2; the association is dependent on CDK1. In terms of processing, phosphorylated by TTK, essentially at Thr-88, Thr94, Thr-169 and Thr-230. Phosphorylation (probably by CDK1) promotes targeting of the CPC to centromeric DNA. Sumoylated by UBE2I and RANBP2. Desumoylated by SENP3 through the removal of SUMO2 and SUMO3.

The protein localises to the nucleus. The protein resides in the nucleolus. It is found in the cytoplasm. Its subcellular location is the chromosome. It localises to the centromere. The protein localises to the cytoskeleton. The protein resides in the spindle. In terms of biological role, component of the chromosomal passenger complex (CPC), a complex that acts as a key regulator of mitosis. The CPC complex has essential functions at the centromere in ensuring correct chromosome alignment and segregation and is required for chromatin-induced microtubule stabilization and spindle assembly. In the complex, it may be required to direct the CPC to centromeric DNA. In Pongo abelii (Sumatran orangutan), this protein is Borealin (CDCA8).